Consider the following 400-residue polypeptide: Elongation factor Tu (400 aa).

The 200-residue stretch at 10-209 (KPHVNIGTIG…EVDKYIPTPE (200 aa)) folds into the tr-type G domain. The interval 19 to 26 (GHVDHGKT) is G1. 19–26 (GHVDHGKT) provides a ligand contact to GTP. T26 contributes to the Mg(2+) binding site. Positions 60 to 64 (GITIN) are G2. The interval 81-84 (DCPG) is G3. GTP contacts are provided by residues 81–85 (DCPGH) and 136–139 (NKAD). Residues 136-139 (NKAD) are G4. The tract at residues 174 to 176 (SGL) is G5.

This sequence belongs to the TRAFAC class translation factor GTPase superfamily. Classic translation factor GTPase family. EF-Tu/EF-1A subfamily. In terms of assembly, monomer.

The protein localises to the cytoplasm. The catalysed reaction is GTP + H2O = GDP + phosphate + H(+). Functionally, GTP hydrolase that promotes the GTP-dependent binding of aminoacyl-tRNA to the A-site of ribosomes during protein biosynthesis. This is Elongation factor Tu from Heliobacterium modesticaldum (strain ATCC 51547 / Ice1).